We begin with the raw amino-acid sequence, 107 residues long: uncharacterized protein (107 aa).

The disordered stretch occupies residues 86-107 (QVSNHEEDADVLETQDDNAEQV). Acidic residues predominate over residues 92 to 107 (EDADVLETQDDNAEQV).

This is an uncharacterized protein from Rickettsia prowazekii (strain Madrid E).